Consider the following 317-residue polypeptide: uncharacterized protein (317 aa).

The next 7 membrane-spanning stretches (helical) occupy residues 18-38 (WWII…LIII), 58-78 (IIFG…GFIF), 92-112 (FLGH…WWSV), 130-150 (LFAT…AFGV), 165-185 (QPLS…KGEL), 202-222 (LAFL…LSTV), and 253-273 (LWGG…LMVN).

Belongs to the CbiQ family.

Its subcellular location is the cell membrane. This is an uncharacterized protein from Mycoplasma pneumoniae (strain ATCC 29342 / M129 / Subtype 1) (Mycoplasmoides pneumoniae).